Reading from the N-terminus, the 143-residue chain is Ribosome-binding factor A (143 aa).

Positions 119-143 (KAKQQQFTPDTPDNSESVDGEKEQD) are disordered. Residues 122–133 (QQQFTPDTPDNS) show a composition bias toward polar residues.

This sequence belongs to the RbfA family. Monomer. Binds 30S ribosomal subunits, but not 50S ribosomal subunits or 70S ribosomes.

The protein localises to the cytoplasm. One of several proteins that assist in the late maturation steps of the functional core of the 30S ribosomal subunit. Associates with free 30S ribosomal subunits (but not with 30S subunits that are part of 70S ribosomes or polysomes). Required for efficient processing of 16S rRNA. May interact with the 5'-terminal helix region of 16S rRNA. The protein is Ribosome-binding factor A of Shewanella frigidimarina (strain NCIMB 400).